A 310-amino-acid chain; its full sequence is N-acetyl-gamma-glutamyl-phosphate reductase (310 aa).

Cysteine 117 is a catalytic residue.

The protein belongs to the NAGSA dehydrogenase family. Type 2 subfamily.

Its subcellular location is the cytoplasm. It carries out the reaction N-acetyl-L-glutamate 5-semialdehyde + phosphate + NADP(+) = N-acetyl-L-glutamyl 5-phosphate + NADPH + H(+). The protein operates within amino-acid biosynthesis; L-arginine biosynthesis; N(2)-acetyl-L-ornithine from L-glutamate: step 3/4. Catalyzes the NADPH-dependent reduction of N-acetyl-5-glutamyl phosphate to yield N-acetyl-L-glutamate 5-semialdehyde. The protein is N-acetyl-gamma-glutamyl-phosphate reductase of Rhizobium etli (strain ATCC 51251 / DSM 11541 / JCM 21823 / NBRC 15573 / CFN 42).